A 404-amino-acid chain; its full sequence is 26S proteasome regulatory subunit 6A-B (404 aa).

192–199 provides a ligand contact to ATP; that stretch reads GPPGTGKT.

It belongs to the AAA ATPase family. May form a heterodimer with a related family member.

Its subcellular location is the cytoplasm. It localises to the nucleus. The 26S proteasome is involved in the ATP-dependent degradation of ubiquitinated proteins. The regulatory (or ATPase) complex confers ATP dependency and substrate specificity to the 26S complex. The sequence is that of 26S proteasome regulatory subunit 6A-B (psmc3-b) from Xenopus laevis (African clawed frog).